Here is a 20-residue protein sequence, read N- to C-terminus: Agglutinin beta-3 chain (20 aa).

The disordered stretch occupies residues 1 to 20 (GPNGKSQSIIVGPWGDRVTN).

It belongs to the jacalin lectin family. Formed of four alpha chains and four beta chains.

D-galactose-specific lectin, binds the T-antigen structure Gal-beta1,3-GalNAc. In Maclura pomifera (Osage orange), this protein is Agglutinin beta-3 chain.